We begin with the raw amino-acid sequence, 78 residues long: Large ribosomal subunit protein bL28 (78 aa).

Positions 1-23 (MSRVCQVTGKRPMVGNNRSHAKN) are disordered.

This sequence belongs to the bacterial ribosomal protein bL28 family.

The polypeptide is Large ribosomal subunit protein bL28 (Shewanella pealeana (strain ATCC 700345 / ANG-SQ1)).